Here is a 437-residue protein sequence, read N- to C-terminus: Elongator complex protein 4 (437 aa).

The tract at residues 179-247 (FSKSSSPTTP…TKTGSQDSPL (69 aa)) is disordered. Over residues 181 to 192 (KSSSPTTPSLEQ) the composition is skewed to polar residues. Ser183 bears the Phosphoserine mark. Low complexity predominate over residues 220–237 (SANNNNNNNNNSSSVTSS). Ser242 carries the phosphoserine modification.

This sequence belongs to the ELP4 family. As to quaternary structure, component of the elongator complex composed of Elp1, Elp2, Elp3, Elp4, Elp5 and Elp6. The elongator complex associates with and stabilizes microtubules; efficient interaction requires the full complex.

Its subcellular location is the cytoplasm. The protein localises to the nucleus. It is found in the cytoskeleton. The protein resides in the spindle. Its pathway is tRNA modification; 5-methoxycarbonylmethyl-2-thiouridine-tRNA biosynthesis. Functionally, component of the elongator complex, which is required for multiple tRNA modifications, including mcm5U (5-methoxycarbonylmethyl uridine), mcm5s2U (5-methoxycarbonylmethyl-2-thiouridine), and ncm5U (5-carbamoylmethyl uridine). The elongator complex catalyzes the formation of carboxymethyluridine in the wobble base at position 34 in tRNAs. Binding by the elongator complex stabilizes microtubules and promotes their growth. This induces central spindle asymmetry, promoting polarized signaling endosome trafficking during asymmetric cell division and cell fate assignation of sensory organ precursor cells. The polypeptide is Elongator complex protein 4 (Drosophila melanogaster (Fruit fly)).